The following is a 390-amino-acid chain: uncharacterized protein (390 aa).

A run of 11 helical transmembrane segments spans residues 7-27 (IYILAIVSFLVGTSEYIISGI), 35-55 (LGITLAAAGQLITIFSLVYAL), 77-97 (LGLFVFGNVLAFVLPGYGWFI), 101-121 (IIMAMGAGVVVVTALTIAAKI), 128-148 (GSAIATVVMGFTASLIIGVPL), 161-181 (VFGAIALLGLIAMVVIFFTLP), 203-223 (VAMGLSITFFWLGGYSVAYTY), 238-258 (LLSGVLLIFGIASLVGSKFGG), 281-301 (LILLSLVTHSYIGVLVILILW), 335-355 (MQFAMAVGAGIGGVFVENVSL), and 357-377 (SITWVGALGVMIAIIASLLIF).

The protein belongs to the major facilitator superfamily.

Its subcellular location is the cell membrane. This is an uncharacterized protein from Bacillus subtilis (strain 168).